The following is a 155-amino-acid chain: Ferredoxin-6, chloroplastic (155 aa).

The N-terminal 58 residues, Met1–Ala58, are a transit peptide targeting the chloroplast. The 2Fe-2S ferredoxin-type domain maps to His61–Glu152. [2Fe-2S] cluster contacts are provided by Cys98, Cys103, Cys106, and Cys136.

This sequence belongs to the 2Fe2S plant-type ferredoxin family. [2Fe-2S] cluster is required as a cofactor.

It is found in the plastid. The protein localises to the chloroplast. Its function is as follows. Ferredoxins are iron-sulfur proteins that transfer electrons in a wide variety of metabolic reactions. The protein is Ferredoxin-6, chloroplastic (FDX6) of Zea mays (Maize).